The sequence spans 243 residues: Carboxy-S-adenosyl-L-methionine synthase (243 aa).

Residues Tyr-40, 65–67 (GCS), 90–91 (DN), 118–119 (DI), Asn-133, and Arg-200 contribute to the S-adenosyl-L-methionine site.

It belongs to the class I-like SAM-binding methyltransferase superfamily. Cx-SAM synthase family. Homodimer.

The enzyme catalyses prephenate + S-adenosyl-L-methionine = carboxy-S-adenosyl-L-methionine + 3-phenylpyruvate + H2O. Functionally, catalyzes the conversion of S-adenosyl-L-methionine (SAM) to carboxy-S-adenosyl-L-methionine (Cx-SAM). The chain is Carboxy-S-adenosyl-L-methionine synthase from Shewanella pealeana (strain ATCC 700345 / ANG-SQ1).